The sequence spans 248 residues: MSLGSLAFTLFLTVVAGIKCNGTEVCAGSPGIPGTPGNHGLPGRDGRDGIKGDPGPPGPMGPPGGMPGLPGRDGLPGAPGAPGEHGDKGEPGERGLPGFPAYLDEELQTASYEIKHQILQTMGVLSLQGSMLSVGDKVFSTNGQSVNFDTIREMCTRAGGHIAAPRNPEENEAIASITKKYNTYPYLGVIEGQTPGDFHYLDGASVNYTNWYPGEPRGRGKEKCVEMYTDGKWNDKGCLQYRLAICEF.

An N-terminal signal peptide occupies residues 1 to 20 (MSLGSLAFTLFLTVVAGIKC). Residue N21 is glycosylated (N-linked (GlcNAc...) asparagine). The region spanning 28-100 (GSPGIPGTPG…PGERGLPGFP (73 aa)) is the Collagen-like domain. The segment at 28 to 100 (GSPGIPGTPG…PGERGLPGFP (73 aa)) is disordered. Residues P30, P33, P36, P42, P54, P57, P63, P67, P70, and P76 each carry the 4-hydroxyproline modification. Positions 42-51 (PGRDGRDGIK) are enriched in basic and acidic residues. Residues 54–65 (PGPPGPMGPPGG) show a composition bias toward pro residues. Positions 69-82 (LPGRDGLPGAPGAP) are enriched in low complexity. The span at 84–93 (EHGDKGEPGE) shows a compositional bias: basic and acidic residues. The 117-residue stretch at 132-248 (LSVGDKVFST…LQYRLAICEF (117 aa)) folds into the C-type lectin domain. 2 cysteine pairs are disulfide-bonded: C155/C246 and C224/C238. The N-linked (GlcNAc...) asparagine glycan is linked to N207. Residues E215, R217, N234, and D235 each coordinate Ca(2+).

This sequence belongs to the SFTPA family. Oligomeric complex of 6 set of homotrimers.

It localises to the secreted. The protein resides in the extracellular space. The protein localises to the extracellular matrix. Its subcellular location is the surface film. In terms of biological role, in presence of calcium ions, it binds to surfactant phospholipids and contributes to lower the surface tension at the air-liquid interface in the alveoli of the mammalian lung and is essential for normal respiration. Enhances the expression of MYO18A/SP-R210 on alveolar macrophages. The protein is Pulmonary surfactant-associated protein A (Sftpa1) of Mus musculus (Mouse).